The primary structure comprises 589 residues: UvrABC system protein C (589 aa).

In terms of domain architecture, GIY-YIG spans 13–90; it reads PNPGCYLFKN…IKTHTPKYNF (78 aa). The UVR domain occupies 194-229; sequence KDILKKLHHLMQKASEKMFYEKAQEYRDIIDSIKQT.

The protein belongs to the UvrC family. In terms of assembly, interacts with UvrB in an incision complex.

Its subcellular location is the cytoplasm. The UvrABC repair system catalyzes the recognition and processing of DNA lesions. UvrC both incises the 5' and 3' sides of the lesion. The N-terminal half is responsible for the 3' incision and the C-terminal half is responsible for the 5' incision. The sequence is that of UvrABC system protein C from Aster yellows witches'-broom phytoplasma (strain AYWB).